The following is an 83-amino-acid chain: Mu-theraphotoxin-Hhn2b 1 (83 aa).

The N-terminal stretch at 1-21 is a signal peptide; that stretch reads MKASMFLALAGLVLLFVVCYA. Residues 22–48 constitute a propeptide that is removed on maturation; it reads SESEEKEFPRELISKIFAVDDFKGEER. Disulfide bonds link Cys-50/Cys-65, Cys-57/Cys-70, and Cys-64/Cys-77. At Leu-81 the chain carries Leucine amide.

Belongs to the neurotoxin 10 (Hwtx-1) family. 14 (Hntx-1) subfamily. As to quaternary structure, monomer. In terms of tissue distribution, expressed by the venom gland.

Its subcellular location is the secreted. Functionally, weakly blocks the rat SCN2A/SCN1B (Nav1.2/beta-1) sodium channel (IC(50)=68 uM) and the insect sodium channel para/tipE (IC(50)=4.3 uM), without altering the activation or inactivation kinetics (depressant toxin). The protein is Mu-theraphotoxin-Hhn2b 1 of Cyriopagopus hainanus (Chinese bird spider).